Reading from the N-terminus, the 571-residue chain is Proline--tRNA ligase (571 aa).

This sequence belongs to the class-II aminoacyl-tRNA synthetase family. ProS type 1 subfamily. In terms of assembly, homodimer.

It is found in the cytoplasm. The catalysed reaction is tRNA(Pro) + L-proline + ATP = L-prolyl-tRNA(Pro) + AMP + diphosphate. In terms of biological role, catalyzes the attachment of proline to tRNA(Pro) in a two-step reaction: proline is first activated by ATP to form Pro-AMP and then transferred to the acceptor end of tRNA(Pro). As ProRS can inadvertently accommodate and process non-cognate amino acids such as alanine and cysteine, to avoid such errors it has two additional distinct editing activities against alanine. One activity is designated as 'pretransfer' editing and involves the tRNA(Pro)-independent hydrolysis of activated Ala-AMP. The other activity is designated 'posttransfer' editing and involves deacylation of mischarged Ala-tRNA(Pro). The misacylated Cys-tRNA(Pro) is not edited by ProRS. The polypeptide is Proline--tRNA ligase (Leuconostoc citreum (strain KM20)).